We begin with the raw amino-acid sequence, 428 residues long: 3-phosphoshikimate 1-carboxyvinyltransferase (428 aa).

3 residues coordinate 3-phosphoshikimate: K22, S23, and R27. Phosphoenolpyruvate is bound at residue K22. Positions 95 and 123 each coordinate phosphoenolpyruvate. Residues S170, S171, Q172, S197, D316, and K343 each coordinate 3-phosphoshikimate. Q172 is a binding site for phosphoenolpyruvate. Catalysis depends on D316, which acts as the Proton acceptor. Phosphoenolpyruvate contacts are provided by R347, R390, and K414.

It belongs to the EPSP synthase family. As to quaternary structure, monomer.

The protein resides in the cytoplasm. The catalysed reaction is 3-phosphoshikimate + phosphoenolpyruvate = 5-O-(1-carboxyvinyl)-3-phosphoshikimate + phosphate. Its pathway is metabolic intermediate biosynthesis; chorismate biosynthesis; chorismate from D-erythrose 4-phosphate and phosphoenolpyruvate: step 6/7. Functionally, catalyzes the transfer of the enolpyruvyl moiety of phosphoenolpyruvate (PEP) to the 5-hydroxyl of shikimate-3-phosphate (S3P) to produce enolpyruvyl shikimate-3-phosphate and inorganic phosphate. The polypeptide is 3-phosphoshikimate 1-carboxyvinyltransferase (Laribacter hongkongensis (strain HLHK9)).